The primary structure comprises 484 residues: Glycogen synthase 2 (484 aa).

Lys15 contacts ADP-alpha-D-glucose.

It belongs to the glycosyltransferase 1 family. Bacterial/plant glycogen synthase subfamily.

The enzyme catalyses [(1-&gt;4)-alpha-D-glucosyl](n) + ADP-alpha-D-glucose = [(1-&gt;4)-alpha-D-glucosyl](n+1) + ADP + H(+). It participates in glycan biosynthesis; glycogen biosynthesis. In terms of biological role, synthesizes alpha-1,4-glucan chains using ADP-glucose. The chain is Glycogen synthase 2 from Geobacter metallireducens (strain ATCC 53774 / DSM 7210 / GS-15).